The sequence spans 323 residues: ADP-L-glycero-D-manno-heptose-6-epimerase (323 aa).

Residues 10-11 (FI), 31-32 (DN), Lys-38, Lys-53, 75-79 (EGACS), and Asn-92 contribute to the NADP(+) site. Tyr-139 functions as the Proton acceptor in the catalytic mechanism. Lys-143 lines the NADP(+) pocket. Residue Asn-168 participates in substrate binding. Residues Val-169 and Lys-177 each coordinate NADP(+). Lys-177 acts as the Proton acceptor in catalysis. Residues Asp-179, Lys-186, 200–203 (FGAY), Arg-213, and Tyr-277 contribute to the substrate site.

It belongs to the NAD(P)-dependent epimerase/dehydratase family. HldD subfamily. Homopentamer. NADP(+) is required as a cofactor.

It catalyses the reaction ADP-D-glycero-beta-D-manno-heptose = ADP-L-glycero-beta-D-manno-heptose. It participates in nucleotide-sugar biosynthesis; ADP-L-glycero-beta-D-manno-heptose biosynthesis; ADP-L-glycero-beta-D-manno-heptose from D-glycero-beta-D-manno-heptose 7-phosphate: step 4/4. In terms of biological role, catalyzes the interconversion between ADP-D-glycero-beta-D-manno-heptose and ADP-L-glycero-beta-D-manno-heptose via an epimerization at carbon 6 of the heptose. The chain is ADP-L-glycero-D-manno-heptose-6-epimerase from Hydrogenovibrio crunogenus (strain DSM 25203 / XCL-2) (Thiomicrospira crunogena).